A 49-amino-acid chain; its full sequence is uncharacterized protein (49 aa).

This is an uncharacterized protein from Sulfolobus islandicus filamentous virus (isolate Iceland/Hveragerdi) (SIFV).